The following is a 122-amino-acid chain: Large ribosomal subunit protein uL14 (122 aa).

The protein belongs to the universal ribosomal protein uL14 family. In terms of assembly, part of the 50S ribosomal subunit. Forms a cluster with proteins L3 and L19. In the 70S ribosome, L14 and L19 interact and together make contacts with the 16S rRNA in bridges B5 and B8.

In terms of biological role, binds to 23S rRNA. Forms part of two intersubunit bridges in the 70S ribosome. The sequence is that of Large ribosomal subunit protein uL14 from Staphylococcus haemolyticus (strain JCSC1435).